The following is a 275-amino-acid chain: Intercellular adhesion molecule 2 (275 aa).

An N-terminal signal peptide occupies residues 1–24 (MSSFSYRTLTVALFALICCPGSDE). The Extracellular segment spans residues 25–223 (KVFEVHVRPK…EIYEPVSDSQ (199 aa)). Residues 41–98 (KGSLKVNCSTTCNQPEVGGLETSLDKILLDEQAQWKHYLVSNISHDTVLQCHFTCSGK) form the Ig-like C2-type 1 domain. Asn47, Asn82, Asn105, Asn153, Asn176, and Asn187 each carry an N-linked (GlcNAc...) asparagine glycan. Cystine bridges form between Cys48–Cys91 and Cys52–Cys95. Residues 127-197 (GKSFTIECRV…FSCLAVLDLM (71 aa)) enclose the Ig-like C2-type 2 domain. Cys134 and Cys190 form a disulfide bridge. The chain crosses the membrane as a helical span at residues 224-248 (MVIIVTVVSVLLSLFVTSVLLCFIF). At 249–275 (GQHLRQQRMGTYGVRAAWRRLPQAFRP) the chain is on the cytoplasmic side. The segment at 251–275 (HLRQQRMGTYGVRAAWRRLPQAFRP) is required for interaction with EZR, MSN and RDX and co-localization to microvilli.

Belongs to the immunoglobulin superfamily. ICAM family. Interacts with RDX, EZR and MSN.

It is found in the membrane. It localises to the cell projection. The protein localises to the microvillus. ICAM proteins are ligands for the leukocyte adhesion protein LFA-1 (integrin alpha-L/beta-2). ICAM2 may play a role in lymphocyte recirculation by blocking LFA-1-dependent cell adhesion. It mediates adhesive interactions important for antigen-specific immune response, NK-cell mediated clearance, lymphocyte recirculation, and other cellular interactions important for immune response and surveillance. The chain is Intercellular adhesion molecule 2 (ICAM2) from Pan troglodytes (Chimpanzee).